A 304-amino-acid chain; its full sequence is tRNA dimethylallyltransferase (304 aa).

10-17 serves as a coordination point for ATP; sequence GPTASGKS. Residue 12–17 coordinates substrate; the sequence is TASGKS. Residues 35 to 38 form an interaction with substrate tRNA region; sequence DSRQ.

The protein belongs to the IPP transferase family. Monomer. Requires Mg(2+) as cofactor.

The enzyme catalyses adenosine(37) in tRNA + dimethylallyl diphosphate = N(6)-dimethylallyladenosine(37) in tRNA + diphosphate. Catalyzes the transfer of a dimethylallyl group onto the adenine at position 37 in tRNAs that read codons beginning with uridine, leading to the formation of N6-(dimethylallyl)adenosine (i(6)A). The protein is tRNA dimethylallyltransferase of Gloeothece citriformis (strain PCC 7424) (Cyanothece sp. (strain PCC 7424)).